Reading from the N-terminus, the 262-residue chain is Putative outer membrane protein CPn_1034/CP_0818/CPj1034/CpB1074 (262 aa).

Residues 1–17 (MKTWLFFTFLFSCSSFY) form the signal peptide.

The protein resides in the cell outer membrane. In Chlamydia pneumoniae (Chlamydophila pneumoniae), this protein is Putative outer membrane protein CPn_1034/CP_0818/CPj1034/CpB1074.